A 190-amino-acid polypeptide reads, in one-letter code: MSKDYFLSSLIKCIRKLYDKKIIAYPTEAMFGLGCDPTSEKAVKRLLDLKKRSIKKGLILVASNYNQIKMYINESKLSAQQKKTMFFHWPGPYTFLVPANSLVPCWLTGQFDTIAVRISAHFSIIKLCNVFGKALVSTSANISNMSPCLTREDVLKDFGKDFPVLYGHIGNESHPSKIINIVNGKLIRYV.

A YrdC-like domain is found at 7–190 (LSSLIKCIRK…IVNGKLIRYV (184 aa)).

The protein belongs to the SUA5 family. TsaC subfamily.

The protein resides in the cytoplasm. It catalyses the reaction L-threonine + hydrogencarbonate + ATP = L-threonylcarbamoyladenylate + diphosphate + H2O. Its function is as follows. Required for the formation of a threonylcarbamoyl group on adenosine at position 37 (t(6)A37) in tRNAs that read codons beginning with adenine. Catalyzes the conversion of L-threonine, HCO(3)(-)/CO(2) and ATP to give threonylcarbamoyl-AMP (TC-AMP) as the acyladenylate intermediate, with the release of diphosphate. The sequence is that of Threonylcarbamoyl-AMP synthase from Buchnera aphidicola subsp. Schizaphis graminum (strain Sg).